A 117-amino-acid chain; its full sequence is Gamma-aminobutyric acid receptor-associated protein-like 1 (117 aa).

Residue Gly116 is the site of Phosphatidylethanolamine amidated glycine; alternate attachment. Residue Gly116 is the site of Phosphatidylserine amidated glycine; alternate attachment. A propeptide (removed in mature form) is located at residue Lys117.

This sequence belongs to the ATG8 family. In terms of assembly, interacts with ATG13, OPRK1, RB1CC1 and ULK1. Interacts with TP53INP1 and TP53INP2. Directly interacts with SQSTM1. Interacts with ATG3, ATG7 and MAP15. Interacts with TECPR2. Interacts with TBC1D5. Interacts with MAPK15. Interacts with TRIM5. Interacts with MEFV and TRIM21. Interacts with WDFY3. Interacts with the reticulophagy receptor TEX264. Interacts with UBA5. Interacts with KBTBD6 and KBTBD7; the interaction is direct. Interacts with reticulophagy regulators RETREG1, RETREG2 and RETREG3. Interacts with IRGM. Interacts with DNM2. Interacts with NCOA4 (via C-terminus). The precursor molecule is cleaved by ATG4 (ATG4A, ATG4B, ATG4C or ATG4D) to expose the glycine at the C-terminus and form the cytosolic form, GABARAPL1-I. The processed form is then activated by APG7L/ATG7, transferred to ATG3 and conjugated to phosphatidylethanolamine (PE) phospholipid to form the membrane-bound form, GABARAPL1-II. During non-canonical autophagy, the processed form is conjugated to phosphatidylserine (PS) phospholipid. ATG4 proteins also mediate the delipidation of PE-conjugated forms required for GABARAPL1 recycling when autophagosomes fuse with lysosomes. In addition, ATG4B and ATG4D mediate delipidation of ATG8 proteins conjugated to PS during non-canonical autophagy. ATG4B constitutes the major protein for proteolytic activation. ATG4D is the main enzyme for delipidation activity.

The protein localises to the cytoplasmic vesicle. Its subcellular location is the autophagosome. It is found in the cytoplasmic vesicle membrane. The protein resides in the cytoplasm. It localises to the cytoskeleton. The protein localises to the endoplasmic reticulum. Its subcellular location is the golgi apparatus. Its function is as follows. Ubiquitin-like modifier that increases cell-surface expression of kappa-type opioid receptor through facilitating anterograde intracellular trafficking of the receptor. Involved in formation of autophagosomal vacuoles. While LC3s are involved in elongation of the phagophore membrane, the GABARAP/GATE-16 subfamily is essential for a later stage in autophagosome maturation. Through its interaction with the reticulophagy receptor TEX264, participates in the remodeling of subdomains of the endoplasmic reticulum into autophagosomes upon nutrient stress, which then fuse with lysosomes for endoplasmic reticulum turnover. The chain is Gamma-aminobutyric acid receptor-associated protein-like 1 from Pongo abelii (Sumatran orangutan).